A 370-amino-acid polypeptide reads, in one-letter code: Histidinol-phosphate aminotransferase (370 aa).

Lysine 229 is modified (N6-(pyridoxal phosphate)lysine).

It belongs to the class-II pyridoxal-phosphate-dependent aminotransferase family. Histidinol-phosphate aminotransferase subfamily. As to quaternary structure, homodimer. Pyridoxal 5'-phosphate serves as cofactor.

The enzyme catalyses L-histidinol phosphate + 2-oxoglutarate = 3-(imidazol-4-yl)-2-oxopropyl phosphate + L-glutamate. The protein operates within amino-acid biosynthesis; L-histidine biosynthesis; L-histidine from 5-phospho-alpha-D-ribose 1-diphosphate: step 7/9. This is Histidinol-phosphate aminotransferase from Helicobacter hepaticus (strain ATCC 51449 / 3B1).